A 79-amino-acid chain; its full sequence is Small polypeptide DEVIL 8 (79 aa).

The span at 1 to 12 (MSRLRNSAQLQL) shows a compositional bias: polar residues. Positions 1–37 (MSRLRNSAQLQLSKKESLGDNGGALNTTRSSRQKQGK) are disordered. A glycan (N-linked (GlcNAc...) asparagine) is linked at asparagine 26. The required for DVL/RTFL small polypeptide activity stretch occupies residues 39–70 (GFTRKCGRLVKEQRARFYIMRRCVVMLICWTD). Residues 55-71 (FYIMRRCVVMLICWTDH) traverse the membrane as a helical segment. N-linked (GlcNAc...) asparagine glycosylation occurs at asparagine 74.

This sequence belongs to the DVL/RTFL small polypeptides family.

Its subcellular location is the cell membrane. In terms of biological role, small polypeptide acting as a regulatory molecule which coordinates cellular responses required for differentiation, growth and development, probably by restricting polar cell proliferation in lateral organs and coordinating socket cell recruitment and differentiation at trichome sites. The protein is Small polypeptide DEVIL 8 of Arabidopsis thaliana (Mouse-ear cress).